We begin with the raw amino-acid sequence, 409 residues long: Pyrophosphate--fructose 6-phosphate 1-phosphotransferase (409 aa).

A diphosphate-binding site is contributed by G14. D123 provides a ligand contact to Mg(2+). Residues 151–153 (TVD), 196–198 (MGR), E268, and 325–328 (YFAR) contribute to the substrate site. D153 acts as the Proton acceptor in catalysis.

It belongs to the phosphofructokinase type A (PFKA) family. PPi-dependent PFK group II subfamily. Clade 'P' sub-subfamily. Homodimer. The cofactor is Mg(2+).

The protein resides in the cytoplasm. The enzyme catalyses beta-D-fructose 6-phosphate + diphosphate = beta-D-fructose 1,6-bisphosphate + phosphate + H(+). Its pathway is carbohydrate degradation; glycolysis; D-glyceraldehyde 3-phosphate and glycerone phosphate from D-glucose: step 3/4. Non-allosteric. Its function is as follows. Catalyzes the phosphorylation of D-fructose 6-phosphate, the first committing step of glycolysis. Uses inorganic phosphate (PPi) as phosphoryl donor instead of ATP like common ATP-dependent phosphofructokinases (ATP-PFKs), which renders the reaction reversible, and can thus function both in glycolysis and gluconeogenesis. Consistently, PPi-PFK can replace the enzymes of both the forward (ATP-PFK) and reverse (fructose-bisphosphatase (FBPase)) reactions. The polypeptide is Pyrophosphate--fructose 6-phosphate 1-phosphotransferase (Methylomonas methanica).